The primary structure comprises 427 residues: 3-phosphoshikimate 1-carboxyvinyltransferase (427 aa).

Positions 22, 23, and 27 each coordinate 3-phosphoshikimate. Lys22 provides a ligand contact to phosphoenolpyruvate. Phosphoenolpyruvate-binding residues include Gly96 and Arg124. 3-phosphoshikimate-binding residues include Ser169, Ser170, Gln171, Ser197, Asp313, Asn336, and Lys340. A phosphoenolpyruvate-binding site is contributed by Gln171. Catalysis depends on Asp313, which acts as the Proton acceptor. Phosphoenolpyruvate contacts are provided by Arg344, Arg386, and Lys411.

This sequence belongs to the EPSP synthase family. As to quaternary structure, monomer.

It localises to the cytoplasm. The enzyme catalyses 3-phosphoshikimate + phosphoenolpyruvate = 5-O-(1-carboxyvinyl)-3-phosphoshikimate + phosphate. It functions in the pathway metabolic intermediate biosynthesis; chorismate biosynthesis; chorismate from D-erythrose 4-phosphate and phosphoenolpyruvate: step 6/7. Functionally, catalyzes the transfer of the enolpyruvyl moiety of phosphoenolpyruvate (PEP) to the 5-hydroxyl of shikimate-3-phosphate (S3P) to produce enolpyruvyl shikimate-3-phosphate and inorganic phosphate. This Escherichia coli O9:H4 (strain HS) protein is 3-phosphoshikimate 1-carboxyvinyltransferase.